Here is a 413-residue protein sequence, read N- to C-terminus: S-adenosylmethionine synthase (413 aa).

Histidine 15 contributes to the ATP binding site. Residue aspartate 17 participates in Mg(2+) binding. Residue glutamate 43 participates in K(+) binding. L-methionine-binding residues include glutamate 56 and glutamine 100. Residues glutamine 100–glutamate 110 form a flexible loop region. Residues aspartate 171–lysine 173, lysine 248–phenylalanine 249, aspartate 257, arginine 263–lysine 264, alanine 280, and lysine 284 contribute to the ATP site. Residue aspartate 257 coordinates L-methionine. Lysine 288 contributes to the L-methionine binding site.

It belongs to the AdoMet synthase family. In terms of assembly, homotetramer; dimer of dimers. It depends on Mg(2+) as a cofactor. The cofactor is K(+).

The protein localises to the cytoplasm. It catalyses the reaction L-methionine + ATP + H2O = S-adenosyl-L-methionine + phosphate + diphosphate. It participates in amino-acid biosynthesis; S-adenosyl-L-methionine biosynthesis; S-adenosyl-L-methionine from L-methionine: step 1/1. Catalyzes the formation of S-adenosylmethionine (AdoMet) from methionine and ATP. The overall synthetic reaction is composed of two sequential steps, AdoMet formation and the subsequent tripolyphosphate hydrolysis which occurs prior to release of AdoMet from the enzyme. The chain is S-adenosylmethionine synthase from Prochlorococcus marinus (strain MIT 9215).